Reading from the N-terminus, the 62-residue chain is MAKTVVRKNESLDDALRRFKRTVSKSGTLQEYRKREFYEKPSVKKKLKSEAARKRKNRRRFK.

Residues 43-52 are compositionally biased toward basic and acidic residues; it reads VKKKLKSEAA. The disordered stretch occupies residues 43-62; the sequence is VKKKLKSEAARKRKNRRRFK. Residues 53–62 are compositionally biased toward basic residues; sequence RKRKNRRRFK.

The protein belongs to the bacterial ribosomal protein bS21 family.

The protein is Small ribosomal subunit protein bS21 of Lactiplantibacillus plantarum (strain ATCC BAA-793 / NCIMB 8826 / WCFS1) (Lactobacillus plantarum).